Reading from the N-terminus, the 184-residue chain is PEVERKSKITASRKLLKSLMLAKAKECQQEHEAREAEKVRYLAERIPALQTRGLSLSALQDLCRQLHAKVEVVDEERYDIEAKCLHNTREIKDLKLKVLDLRGKFKRPPLRRVRVSADAMLRALLGSKHKVSMDLRANLKSVKKEDTEKERPVEVGDWRKNVEAMSGMEGRKKMFDAAKSPTSQ.

Pro-1 carries the post-translational modification N-acetylproline; partial. An involved in binding TNC region spans residues 1–45 (PEVERKSKITASRKLLKSLMLAKAKECQQEHEAREAEKVRYLAER). Ser-55 is subject to Phosphoserine. An involved in binding TNC and actin region spans residues 94–115 (LKLKVLDLRGKFKRPPLRRVRV).

This sequence belongs to the troponin I family. In terms of assembly, binds to actin and tropomyosin. Post-translationally, in the muscle sample, approximately 25% of the chains were blocked. Pro-1 is probably acetylated. The N-terminus is blocked.

In terms of biological role, troponin I is the inhibitory subunit of troponin, the thin filament regulatory complex which confers calcium-sensitivity to striated muscle actomyosin ATPase activity. In Oryctolagus cuniculus (Rabbit), this protein is Troponin I, slow skeletal muscle (TNNI1).